Consider the following 433-residue polypeptide: Pyrimidine-nucleoside phosphorylase (433 aa).

81–83 (KHS) contacts phosphate. 2 residues coordinate K(+): G88 and T90. Phosphate-binding positions include T92, 108–110 (KMS), and T120. Residues R168 and K187 each coordinate substrate. Residues L243, A246, and E255 each coordinate K(+).

Belongs to the thymidine/pyrimidine-nucleoside phosphorylase family. Homodimer. K(+) is required as a cofactor.

It carries out the reaction uridine + phosphate = alpha-D-ribose 1-phosphate + uracil. It catalyses the reaction thymidine + phosphate = 2-deoxy-alpha-D-ribose 1-phosphate + thymine. The enzyme catalyses 2'-deoxyuridine + phosphate = 2-deoxy-alpha-D-ribose 1-phosphate + uracil. Catalyzes phosphorolysis of the pyrimidine nucleosides uridine, thymidine and 2'-deoxyuridine with the formation of the corresponding pyrimidine base and ribose-1-phosphate. This is Pyrimidine-nucleoside phosphorylase (pdp) from Staphylococcus aureus (strain MSSA476).